A 585-amino-acid chain; its full sequence is Staphyloferrin A synthase (585 aa).

It belongs to the IucA/IucC family.

The catalysed reaction is N(5)-[(S)-citryl]-D-ornithine + citrate + ATP = staphyloferrin A + AMP + diphosphate + H(+). Its pathway is siderophore biosynthesis. Its function is as follows. Involved in the biosynthesis of the siderophore staphyloferrin A. Catalyzes the ATP-dependent condensation of a citryl-D-ornithine intermediate, produced by SfnaD, and citrate to form staphyloferrin A. The polypeptide is Staphyloferrin A synthase (Staphylococcus aureus (strain NCTC 8325 / PS 47)).